The following is a 447-amino-acid chain: Elongation factor 1-alpha (447 aa).

The region spanning 5–230 (KVHINIVVIG…DNINEPKRPS (226 aa)) is the tr-type G domain. Residues 14 to 21 (GHVDSGKS) are G1. 14–21 (GHVDSGKS) contacts GTP. Lysine 55 carries the N6,N6-dimethyllysine modification. A G2 region spans residues 70–74 (GITID). N6,N6,N6-trimethyllysine is present on lysine 79. The tract at residues 91 to 94 (DAPG) is G3. Residues 91–95 (DAPGH) and 153–156 (NKMD) contribute to the GTP site. A G4 region spans residues 153 to 156 (NKMD). Residue lysine 187 is modified to N6,N6,N6-trimethyllysine. The tract at residues 194–196 (SGF) is G5. Lysine 261 is subject to N6-methyllysine. The residue at position 289 (glutamate 289) is a 5-glutamyl glycerylphosphorylethanolamine. Lysine 306 carries the post-translational modification N6,N6,N6-trimethyllysine. Position 362 is a 5-glutamyl glycerylphosphorylethanolamine (glutamate 362). An N6,N6,N6-trimethyllysine modification is found at lysine 396.

It belongs to the TRAFAC class translation factor GTPase superfamily. Classic translation factor GTPase family. EF-Tu/EF-1A subfamily.

It is found in the cytoplasm. In terms of biological role, this protein promotes the GTP-dependent binding of aminoacyl-tRNA to the A-site of ribosomes during protein biosynthesis. The chain is Elongation factor 1-alpha from Vicia faba (Broad bean).